The primary structure comprises 210 residues: Small ribosomal subunit protein uS5 (210 aa).

The segment covering 1–11 has biased composition (polar residues); sequence MTQPNTQTTPN. The interval 1–56 is disordered; the sequence is MTQPNTQTTPNDVPAAAEGQHQEQQQQQRRGGGRERRGGGRRGDRRGQERDSEWQE. The segment covering 18–29 has biased composition (low complexity); that stretch reads EGQHQEQQQQQR. A compositionally biased stretch (basic and acidic residues) spans 32–56; the sequence is GGRERRGGGRRGDRRGQERDSEWQE. One can recognise an S5 DRBM domain in the interval 54-117; that stretch reads WQERVVQIRR…ADGKKHLVKV (64 aa).

This sequence belongs to the universal ribosomal protein uS5 family. Part of the 30S ribosomal subunit. Contacts proteins S4 and S8.

Functionally, with S4 and S12 plays an important role in translational accuracy. In terms of biological role, located at the back of the 30S subunit body where it stabilizes the conformation of the head with respect to the body. The chain is Small ribosomal subunit protein uS5 from Prochlorococcus marinus (strain MIT 9303).